We begin with the raw amino-acid sequence, 422 residues long: Choline monooxygenase, chloroplastic (422 aa).

The N-terminal 47 residues, 1–47 (MMTTLTATVPEFLPPSLKSTRGYFNSHSEFGVSISKFSRRRFHNPTR), are a transit peptide targeting the chloroplast. The 108-residue stretch at 96–203 (WQAVGYSDQI…VAVWGPFVLL (108 aa)) folds into the Rieske domain. The [2Fe-2S] cluster site is built by Cys-138, His-140, Cys-157, and His-160. Fe cation contacts are provided by His-269 and His-274.

The protein belongs to the choline monooxygenase family. [2Fe-2S] cluster is required as a cofactor. It depends on Fe cation as a cofactor. The cofactor is Mg(2+).

Its subcellular location is the plastid. The protein localises to the chloroplast stroma. The catalysed reaction is choline + 2 reduced [2Fe-2S]-[ferredoxin] + O2 + 2 H(+) = betaine aldehyde hydrate + 2 oxidized [2Fe-2S]-[ferredoxin] + H2O. Its pathway is amine and polyamine biosynthesis; betaine biosynthesis via choline pathway; betaine aldehyde from choline (monooxygenase route): step 1/1. Its function is as follows. Catalyzes the first step of the osmoprotectant glycine betaine synthesis. The polypeptide is Choline monooxygenase, chloroplastic (Arabidopsis thaliana (Mouse-ear cress)).